Consider the following 219-residue polypeptide: UPF0173 metal-dependent hydrolase LSL_0324 (219 aa).

It belongs to the UPF0173 family.

The polypeptide is UPF0173 metal-dependent hydrolase LSL_0324 (Ligilactobacillus salivarius (strain UCC118) (Lactobacillus salivarius)).